The sequence spans 401 residues: E3 ubiquitin-protein ligase DA2 (401 aa).

The RING-type; degenerate zinc finger occupies 59–102; sequence CPICFLYYPSLNRSRCCMKSICTECFLQMKNPNSARPTQCPFCK. The segment covering 139–153 has biased composition (basic and acidic residues); sequence KEMQDDEEKMQKRLE. Residues 139 to 164 form a disordered region; it reads KEMQDDEEKMQKRLESCSSSTSAMTG.

Interacts with DA1 (via C-terminus).

The catalysed reaction is S-ubiquitinyl-[E2 ubiquitin-conjugating enzyme]-L-cysteine + [acceptor protein]-L-lysine = [E2 ubiquitin-conjugating enzyme]-L-cysteine + N(6)-ubiquitinyl-[acceptor protein]-L-lysine.. It functions in the pathway protein modification; protein ubiquitination. Functionally, E3 ubiquitin-protein ligase involved in the regulation of organ and seed size. Acts synergistically with DA1 to regulate seed size. Functions synergistically with DA1 to restrict cell proliferation in the maternal integuments of ovules and developing seeds. Seems to function independently of BB. Possesses E3 ubiquitin-protein ligase activity in vitro. Polyubiquitinates DA1, DAR1 and DAR2, but not DAR3. The protein is E3 ubiquitin-protein ligase DA2 of Arabidopsis thaliana (Mouse-ear cress).